A 383-amino-acid chain; its full sequence is Anhydro-N-acetylmuramic acid kinase (383 aa).

Gly9–Asp16 serves as a coordination point for ATP.

The protein belongs to the anhydro-N-acetylmuramic acid kinase family.

It catalyses the reaction 1,6-anhydro-N-acetyl-beta-muramate + ATP + H2O = N-acetyl-D-muramate 6-phosphate + ADP + H(+). It participates in amino-sugar metabolism; 1,6-anhydro-N-acetylmuramate degradation. Its pathway is cell wall biogenesis; peptidoglycan recycling. In terms of biological role, catalyzes the specific phosphorylation of 1,6-anhydro-N-acetylmuramic acid (anhMurNAc) with the simultaneous cleavage of the 1,6-anhydro ring, generating MurNAc-6-P. Is required for the utilization of anhMurNAc either imported from the medium or derived from its own cell wall murein, and thus plays a role in cell wall recycling. The sequence is that of Anhydro-N-acetylmuramic acid kinase from Crocosphaera subtropica (strain ATCC 51142 / BH68) (Cyanothece sp. (strain ATCC 51142)).